We begin with the raw amino-acid sequence, 1748 residues long: WD repeat-containing protein 90 (1748 aa).

Residues 1 to 207 (MARAWQHPFL…VTPMPREMAF (207 aa)) form a binds with microtubules region. Position 241 is a phosphoserine (serine 241). The disordered stretch occupies residues 274-308 (QTPSPTASGRAALAPRPFPEVSLSQERSDASNADG). 21 WD repeats span residues 407-450 (GHTD…CLFR), 452-494 (PMHV…LGGE), 501-541 (AHTD…LRSC), 615-654 (SSGP…VLLE), 656-695 (EHEG…YHML), 698-737 (SHTA…QLYD), 740-779 (SSED…VLVE), 782-821 (CHRG…WHVL), 882-922 (SRLD…IIRE), 926-964 (VHPE…SPGP), 969-1009 (GHSE…QSFP), 1156-1201 (GHSA…CQHL), 1204-1245 (PHST…LVSS), 1247-1286 (RLPE…ADIS), 1298-1326 (VGAG…VCVW), 1327-1376 (DTRA…ELRC), 1433-1472 (GHRS…LVIQ), 1475-1520 (VLNQ…MELK), 1523-1562 (PHPV…TFRV), 1568-1614 (GAPI…NHCE), and 1715-1748 (GHDN…VPGL). The interval 1004 to 1071 (SDQSFPGAPP…GARDTRNSGA (68 aa)) is disordered.

It belongs to the WD repeat WDR90/POC16 family.

It is found in the cytoplasm. The protein resides in the cytoskeleton. The protein localises to the microtubule organizing center. It localises to the centrosome. Its subcellular location is the centriole. It is found in the centriolar satellite. Functionally, microtubule-binding protein that plays a crucial role in ensuring inner core protein localization within the centriole core, as well as in maintaining the microtubule wall integrity and the overall centriole roundness and stability. Required for efficient primary cilium formation. In Homo sapiens (Human), this protein is WD repeat-containing protein 90 (WDR90).